A 156-amino-acid chain; its full sequence is Ribosomal RNA large subunit methyltransferase H (156 aa).

S-adenosyl-L-methionine is bound by residues leucine 73, glycine 104, and 123–128 (LSDLTL).

This sequence belongs to the RNA methyltransferase RlmH family. Homodimer.

It localises to the cytoplasm. The enzyme catalyses pseudouridine(1915) in 23S rRNA + S-adenosyl-L-methionine = N(3)-methylpseudouridine(1915) in 23S rRNA + S-adenosyl-L-homocysteine + H(+). Its function is as follows. Specifically methylates the pseudouridine at position 1915 (m3Psi1915) in 23S rRNA. The chain is Ribosomal RNA large subunit methyltransferase H from Methylibium petroleiphilum (strain ATCC BAA-1232 / LMG 22953 / PM1).